A 266-amino-acid polypeptide reads, in one-letter code: GATA-type zinc finger protein 1 (266 aa).

Disordered stretches follow at residues Met1–Pro31, Thr106–Gln129, and Cys171–Ala191. A compositionally biased stretch (polar residues) spans Thr106–Ser121. The GATA-type zinc finger occupies Cys197–Cys221.

Specifically expressed in adult testis and ovary. Expressed at high levels in the somatic cells of the developing gonads, including Leydig cells in the testes and granulosa cells in the ovaries.

The protein resides in the nucleus. Functionally, transcriptional regulator that plays a key role in germ cell development. Determines the oogenic fate by activating key genes for the oogenic program and meiotic prophase entry. Acts downstream of bone morphogenetic protein (BMP) by regulating expression of genes required for the oogenic programs, which are repressed by Polycomb activities in sexually uncommitted germ cells. Regulates expression of STRA8, a central downstream effector for the meiotic program. Acts independently of retinoic acid (RA). In males, not required for germ-cell sex determination, but required to allow the spermatogonia to efficiently accomplish the meiotic prophase. This chain is GATA-type zinc finger protein 1, found in Mus musculus (Mouse).